A 155-amino-acid polypeptide reads, in one-letter code: Endoribonuclease YbeY (155 aa).

The Zn(2+) site is built by His115, His119, and His125.

Belongs to the endoribonuclease YbeY family. It depends on Zn(2+) as a cofactor.

The protein resides in the cytoplasm. Single strand-specific metallo-endoribonuclease involved in late-stage 70S ribosome quality control and in maturation of the 3' terminus of the 16S rRNA. This chain is Endoribonuclease YbeY, found in Polynucleobacter asymbioticus (strain DSM 18221 / CIP 109841 / QLW-P1DMWA-1) (Polynucleobacter necessarius subsp. asymbioticus).